The chain runs to 49 residues: IgW transmembrane form Tm2T7/Tm7T7/Tm3T3 (49 aa).

An N-linked (GlcNAc...) asparagine glycan is attached at Asn-3. The chain crosses the membrane as a helical span at residues 25–45; the sequence is VAAFAILFILSFLYSTFVTVV.

Expressed in the spleen. May also be expressed in other lymphoid tissues.

The protein resides in the membrane. The sequence is that of IgW transmembrane form Tm2T7/Tm7T7/Tm3T3 from Heterodontus francisci (Horn shark).